The chain runs to 88 residues: MKAGIHPEYREVLFHDVSNDFKFITRSTINTREKIEFEGTEYPLVKIEVSSESHPFYTGKHKIVDTAGRVDKFRKKFGTVGSKTQMAE.

It belongs to the bacterial ribosomal protein bL31 family. Type B subfamily. In terms of assembly, part of the 50S ribosomal subunit.

The sequence is that of Large ribosomal subunit protein bL31B from Herminiimonas arsenicoxydans.